The chain runs to 427 residues: 3-phosphoshikimate 1-carboxyvinyltransferase (427 aa).

Residues Lys23, Ser24, and Arg28 each contribute to the 3-phosphoshikimate site. A phosphoenolpyruvate-binding site is contributed by Lys23. Positions 97 and 125 each coordinate phosphoenolpyruvate. Ser170, Ser171, Gln172, Ser198, Asp314, Asn337, and Lys341 together coordinate 3-phosphoshikimate. A phosphoenolpyruvate-binding site is contributed by Gln172. Asp314 serves as the catalytic Proton acceptor. Phosphoenolpyruvate contacts are provided by Arg345, Arg387, and Lys412.

Belongs to the EPSP synthase family. As to quaternary structure, monomer.

It localises to the cytoplasm. The enzyme catalyses 3-phosphoshikimate + phosphoenolpyruvate = 5-O-(1-carboxyvinyl)-3-phosphoshikimate + phosphate. Its pathway is metabolic intermediate biosynthesis; chorismate biosynthesis; chorismate from D-erythrose 4-phosphate and phosphoenolpyruvate: step 6/7. Functionally, catalyzes the transfer of the enolpyruvyl moiety of phosphoenolpyruvate (PEP) to the 5-hydroxyl of shikimate-3-phosphate (S3P) to produce enolpyruvyl shikimate-3-phosphate and inorganic phosphate. The protein is 3-phosphoshikimate 1-carboxyvinyltransferase of Buchnera aphidicola subsp. Acyrthosiphon pisum (strain 5A).